Consider the following 264-residue polypeptide: MQQYLDLMKHILAEGVDKSDRTGTGTRSVFGYQMRFDLSKGFPLVTTKKCHMRSIIHELLWFLKGDTNIAYLRDNKVSIWDEWADENGDLGPVYGAQWRSWPTQSGEAIDQISQVIAQIKSQPDSRRLIVSAWNVGELDKMALAPCHAFFQFYVADGKLSCQLYQRSCDVFLGLPFNIASYALLTMMVAQQCDLALGDFVWTGGDTHLYSNHMEQTALQLSREPRPLPTMTILRKPASIFDYQFDDFALSNYDPHPHIKAPVAV.

Arg21 contacts dUMP. Position 51 (His51) interacts with (6R)-5,10-methylene-5,6,7,8-tetrahydrofolate. Arg126–Arg127 contacts dUMP. Cys146 functions as the Nucleophile in the catalytic mechanism. Residues Arg166–Asp169, Asn177, and His207–Tyr209 each bind dUMP. (6R)-5,10-methylene-5,6,7,8-tetrahydrofolate is bound at residue Asp169. A (6R)-5,10-methylene-5,6,7,8-tetrahydrofolate-binding site is contributed by Ala263.

This sequence belongs to the thymidylate synthase family. Bacterial-type ThyA subfamily. Homodimer.

Its subcellular location is the cytoplasm. The catalysed reaction is dUMP + (6R)-5,10-methylene-5,6,7,8-tetrahydrofolate = 7,8-dihydrofolate + dTMP. The protein operates within pyrimidine metabolism; dTTP biosynthesis. Its function is as follows. Catalyzes the reductive methylation of 2'-deoxyuridine-5'-monophosphate (dUMP) to 2'-deoxythymidine-5'-monophosphate (dTMP) while utilizing 5,10-methylenetetrahydrofolate (mTHF) as the methyl donor and reductant in the reaction, yielding dihydrofolate (DHF) as a by-product. This enzymatic reaction provides an intracellular de novo source of dTMP, an essential precursor for DNA biosynthesis. The sequence is that of Thymidylate synthase from Shewanella oneidensis (strain ATCC 700550 / JCM 31522 / CIP 106686 / LMG 19005 / NCIMB 14063 / MR-1).